We begin with the raw amino-acid sequence, 542 residues long: Carbamoyl phosphate synthase large chain, C-terminal section (542 aa).

Positions 1 to 389 (MSDKVLVIGA…WKAQLAAGHE (389 aa)) are carbamoyl phosphate synthetic domain. One can recognise an ATP-grasp domain in the interval 122–316 (SKLLKKLGIP…LAKIGTKAIL (195 aa)). Arginine 158, arginine 197, isoleucine 199, glutamate 204, glycine 230, valine 231, histidine 232, serine 233, glutamine 273, and glutamate 287 together coordinate ATP. Mg(2+) is bound by residues glutamine 273, glutamate 287, and asparagine 289. 3 residues coordinate Mn(2+): glutamine 273, glutamate 287, and asparagine 289. The region spanning 388 to 542 (HELPLEGTAV…KPEELTRYGG (155 aa)) is the MGS-like domain. Residues 390 to 542 (LPLEGTAVIS…KPEELTRYGG (153 aa)) are allosteric domain.

It belongs to the CarB family. As to quaternary structure, composed of two chains; the small (or glutamine) chain promotes the hydrolysis of glutamine to ammonia, which is used by the large (or ammonia) chain to synthesize carbamoyl phosphate. Tetramer of heterodimers (alpha,beta)4. Mg(2+) serves as cofactor. The cofactor is Mn(2+).

The catalysed reaction is hydrogencarbonate + L-glutamine + 2 ATP + H2O = carbamoyl phosphate + L-glutamate + 2 ADP + phosphate + 2 H(+). It carries out the reaction hydrogencarbonate + NH4(+) + 2 ATP = carbamoyl phosphate + 2 ADP + phosphate + 2 H(+). It functions in the pathway amino-acid biosynthesis; L-arginine biosynthesis; carbamoyl phosphate from bicarbonate: step 1/1. The protein operates within pyrimidine metabolism; UMP biosynthesis via de novo pathway; (S)-dihydroorotate from bicarbonate: step 1/3. Functionally, large subunit of the glutamine-dependent carbamoyl phosphate synthetase (CPSase). CPSase catalyzes the formation of carbamoyl phosphate from the ammonia moiety of glutamine, carbonate, and phosphate donated by ATP, constituting the first step of 2 biosynthetic pathways, one leading to arginine and/or urea and the other to pyrimidine nucleotides. The large subunit (synthetase) binds the substrates ammonia (free or transferred from glutamine from the small subunit), hydrogencarbonate and ATP and carries out an ATP-coupled ligase reaction, activating hydrogencarbonate by forming carboxy phosphate which reacts with ammonia to form carbamoyl phosphate. This chain is Carbamoyl phosphate synthase large chain, C-terminal section (carB2), found in Methanopyrus kandleri (strain AV19 / DSM 6324 / JCM 9639 / NBRC 100938).